Here is a 348-residue protein sequence, read N- to C-terminus: Dihydroorotase (348 aa).

Zn(2+)-binding residues include His17 and His19. Residues 19-21 and Asn45 contribute to the substrate site; that span reads HLR. Zn(2+) contacts are provided by Lys103, His140, and His178. The residue at position 103 (Lys103) is an N6-carboxylysine. His140 provides a ligand contact to substrate. Position 223 (Leu223) interacts with substrate. Position 251 (Asp251) interacts with Zn(2+). Asp251 is an active-site residue. His255 and Ala267 together coordinate substrate.

This sequence belongs to the metallo-dependent hydrolases superfamily. DHOase family. Class II DHOase subfamily. Homodimer. Requires Zn(2+) as cofactor.

It carries out the reaction (S)-dihydroorotate + H2O = N-carbamoyl-L-aspartate + H(+). It functions in the pathway pyrimidine metabolism; UMP biosynthesis via de novo pathway; (S)-dihydroorotate from bicarbonate: step 3/3. Catalyzes the reversible cyclization of carbamoyl aspartate to dihydroorotate. This chain is Dihydroorotase, found in Escherichia coli O6:K15:H31 (strain 536 / UPEC).